The sequence spans 498 residues: Probable cytosol aminopeptidase (498 aa).

Positions 267 and 272 each coordinate Mn(2+). Lys-279 is an active-site residue. Residues Asp-290, Asp-349, and Glu-351 each coordinate Mn(2+). The active site involves Arg-353.

It belongs to the peptidase M17 family. It depends on Mn(2+) as a cofactor.

The protein localises to the cytoplasm. It catalyses the reaction Release of an N-terminal amino acid, Xaa-|-Yaa-, in which Xaa is preferably Leu, but may be other amino acids including Pro although not Arg or Lys, and Yaa may be Pro. Amino acid amides and methyl esters are also readily hydrolyzed, but rates on arylamides are exceedingly low.. The catalysed reaction is Release of an N-terminal amino acid, preferentially leucine, but not glutamic or aspartic acids.. Functionally, presumably involved in the processing and regular turnover of intracellular proteins. Catalyzes the removal of unsubstituted N-terminal amino acids from various peptides. This is Probable cytosol aminopeptidase from Dechloromonas aromatica (strain RCB).